Consider the following 466-residue polypeptide: Ribulose bisphosphate carboxylase large chain (466 aa).

An N6,N6,N6-trimethyllysine modification is found at K5. Residues N114 and T164 each contribute to the substrate site. Catalysis depends on K166, which acts as the Proton acceptor. Residue K168 participates in substrate binding. Residues K192, D194, and E195 each coordinate Mg(2+). K192 is modified (N6-carboxylysine). Residue H285 is the Proton acceptor of the active site. Substrate contacts are provided by R286, H318, and S370.

It belongs to the RuBisCO large chain family. Type I subfamily. As to quaternary structure, heterohexadecamer of 8 large chains and 8 small chains; disulfide-linked. The disulfide link is formed within the large subunit homodimers. Requires Mg(2+) as cofactor. In terms of processing, the disulfide bond which can form in the large chain dimeric partners within the hexadecamer appears to be associated with oxidative stress and protein turnover.

The protein localises to the plastid. It is found in the chloroplast. The enzyme catalyses 2 (2R)-3-phosphoglycerate + 2 H(+) = D-ribulose 1,5-bisphosphate + CO2 + H2O. It carries out the reaction D-ribulose 1,5-bisphosphate + O2 = 2-phosphoglycolate + (2R)-3-phosphoglycerate + 2 H(+). RuBisCO catalyzes two reactions: the carboxylation of D-ribulose 1,5-bisphosphate, the primary event in carbon dioxide fixation, as well as the oxidative fragmentation of the pentose substrate in the photorespiration process. Both reactions occur simultaneously and in competition at the same active site. The sequence is that of Ribulose bisphosphate carboxylase large chain from Cucurbita pepo (Vegetable marrow).